Reading from the N-terminus, the 165-residue chain is Phosphopantetheine adenylyltransferase (165 aa).

Threonine 9 lines the substrate pocket. ATP is bound by residues 9-10 and histidine 17; that span reads TF. 3 residues coordinate substrate: lysine 41, leucine 73, and arginine 87. Residues 88–90, glutamate 98, and 123–129 each bind ATP; these read GLR and YQFISGT.

The protein belongs to the bacterial CoaD family. In terms of assembly, homohexamer. It depends on Mg(2+) as a cofactor.

Its subcellular location is the cytoplasm. It catalyses the reaction (R)-4'-phosphopantetheine + ATP + H(+) = 3'-dephospho-CoA + diphosphate. The protein operates within cofactor biosynthesis; coenzyme A biosynthesis; CoA from (R)-pantothenate: step 4/5. In terms of biological role, reversibly transfers an adenylyl group from ATP to 4'-phosphopantetheine, yielding dephospho-CoA (dPCoA) and pyrophosphate. The sequence is that of Phosphopantetheine adenylyltransferase from Burkholderia orbicola (strain MC0-3).